The following is a 383-amino-acid chain: Chaperone protein DnaJ (383 aa).

Positions 5–70 constitute a J domain; the sequence is DYYELLGVEK…QKRAAYDRFG (66 aa). The CR-type zinc finger occupies 137 to 215; the sequence is GKTATVKVPS…CGGSGRTRKE (79 aa). The Zn(2+) site is built by Cys-150, Cys-153, Cys-167, Cys-170, Cys-189, Cys-192, Cys-203, and Cys-206. CXXCXGXG motif repeat units follow at residues 150-157, 167-174, 189-196, and 203-210; these read CEDCKGTG, CSACHGHG, CPTCQGMG, and CRSCGGSG.

This sequence belongs to the DnaJ family. Homodimer. Zn(2+) is required as a cofactor.

Its subcellular location is the cytoplasm. Its function is as follows. Participates actively in the response to hyperosmotic and heat shock by preventing the aggregation of stress-denatured proteins and by disaggregating proteins, also in an autonomous, DnaK-independent fashion. Unfolded proteins bind initially to DnaJ; upon interaction with the DnaJ-bound protein, DnaK hydrolyzes its bound ATP, resulting in the formation of a stable complex. GrpE releases ADP from DnaK; ATP binding to DnaK triggers the release of the substrate protein, thus completing the reaction cycle. Several rounds of ATP-dependent interactions between DnaJ, DnaK and GrpE are required for fully efficient folding. Also involved, together with DnaK and GrpE, in the DNA replication of plasmids through activation of initiation proteins. This Paramagnetospirillum magneticum (strain ATCC 700264 / AMB-1) (Magnetospirillum magneticum) protein is Chaperone protein DnaJ.